A 447-amino-acid polypeptide reads, in one-letter code: Signal recognition particle 54 kDa protein (447 aa).

Residues 103-110 (GVQGSGKT), 185-189 (DTAGR), and 245-248 (TKMD) each bind GTP.

The protein belongs to the GTP-binding SRP family. SRP54 subfamily. Part of the signal recognition particle protein translocation system, which is composed of SRP and FtsY. Archaeal SRP consists of a 7S RNA molecule of 300 nucleotides and two protein subunits: SRP54 and SRP19.

The protein localises to the cytoplasm. The enzyme catalyses GTP + H2O = GDP + phosphate + H(+). Its function is as follows. Involved in targeting and insertion of nascent membrane proteins into the cytoplasmic membrane. Binds to the hydrophobic signal sequence of the ribosome-nascent chain (RNC) as it emerges from the ribosomes. The SRP-RNC complex is then targeted to the cytoplasmic membrane where it interacts with the SRP receptor FtsY. The polypeptide is Signal recognition particle 54 kDa protein (Saccharolobus solfataricus (strain ATCC 35092 / DSM 1617 / JCM 11322 / P2) (Sulfolobus solfataricus)).